A 319-amino-acid chain; its full sequence is 12-(S)-hydroxy-5,8,10,14-eicosatetraenoic acid receptor (319 aa).

The Extracellular portion of the chain corresponds to methionine 1–alanine 16. The N-linked (GlcNAc...) asparagine glycan is linked to asparagine 5. A helical transmembrane segment spans residues valine 17–tryptophan 37. Topologically, residues threonine 38–tyrosine 52 are cytoplasmic. A helical transmembrane segment spans residues leucine 53–phenylalanine 73. The Extracellular segment spans residues tyrosine 74–leucine 91. A helical membrane pass occupies residues phenylalanine 92–leucine 110. The Cytoplasmic segment spans residues aspartate 111–alanine 131. The helical transmembrane segment at tryptophan 132–threonine 152 threads the bilayer. Residues cysteine 153 to valine 180 lie on the Extracellular side of the membrane. A helical membrane pass occupies residues leucine 181 to isoleucine 201. Over arginine 202–arginine 219 the chain is Cytoplasmic. Residues alanine 220 to leucine 240 form a helical membrane-spanning segment. Residues threonine 241–aspartate 265 lie on the Extracellular side of the membrane. A helical membrane pass occupies residues isoleucine 266–phenylalanine 284. Topologically, residues serine 285 to serine 319 are cytoplasmic.

It belongs to the G-protein coupled receptor 1 family. As to quaternary structure, interacts with KRAS; in a farnesylation-dependent manner.

Its subcellular location is the cell membrane. Functionally, high-affinity receptor for 12-(S)-hydroxy-5,8,10,14-eicosatetraenoic acid (12-S-HETE), with much lower affinities for other HETE isomers. 12-S-HETE is a eicosanoid, a 12-lipoxygenase (ALOX12) metabolite of arachidonic acid, involved in many physiologic and pathologic processes, such as cell growth, adhesion, inflammation and cancer promotion. 12-S-HETE-binding leads to activation of ERK1/2 (MAPK3/MAPK1), MEK, and NF-kappa-B pathways and leads to cell growth. Plays a crucial role for proliferation, survival and macropinocytosis of KRAS-dependent cancer cells by mediating the translocation of KRAS from the endoplasmic reticulum to the plasma membrane (PM) and its association with the PM. Contributes to enhanced immune responses by inducing dendrite protrusion of small intestinal CX3CR1(+) phagocytes for the uptake of luminal antigens. Also acts as a key receptor for 12-(S)-HETE-mediated liver ischemia reperfusion injury. Its function is as follows. Proton-sensing G protein-coupled receptor. The chain is 12-(S)-hydroxy-5,8,10,14-eicosatetraenoic acid receptor (Gpr31) from Mus musculus (Mouse).